Reading from the N-terminus, the 562-residue chain is Calmodulin-binding protein 60 F (562 aa).

The interval 1–22 is disordered; that stretch reads MENSMNNRGHGHNQEHADNLPE. The calmodulin-binding stretch occupies residues 5–84; sequence MNNRGHGHNQ…STSRSTEPNK (80 aa). Over residues 12–22 the composition is skewed to basic and acidic residues; the sequence is HNQEHADNLPE. Residues 154 to 273 are DNA-binding; sequence EDDKDWTREH…ALHKKLLKSN (120 aa).

This sequence belongs to the plant ACBP60 protein family. As to quaternary structure, interacts with calmodulin (CaM).

Its subcellular location is the nucleus. Its function is as follows. Transcription activator that binds DNA in a sequence-specific manner, likely 5'-GAAATTTTGG-3', to promote the expression of target genes. This chain is Calmodulin-binding protein 60 F, found in Arabidopsis thaliana (Mouse-ear cress).